The following is a 216-amino-acid chain: Thiamine-phosphate synthase (216 aa).

4-amino-2-methyl-5-(diphosphooxymethyl)pyrimidine contacts are provided by residues 39–43 (QLRRK) and asparagine 71. Mg(2+) is bound by residues aspartate 72 and aspartate 91. Serine 109 contacts 4-amino-2-methyl-5-(diphosphooxymethyl)pyrimidine. Position 136-138 (136-138 (SPT)) interacts with 2-[(2R,5Z)-2-carboxy-4-methylthiazol-5(2H)-ylidene]ethyl phosphate. A 4-amino-2-methyl-5-(diphosphooxymethyl)pyrimidine-binding site is contributed by lysine 139. 2-[(2R,5Z)-2-carboxy-4-methylthiazol-5(2H)-ylidene]ethyl phosphate is bound by residues glycine 172 and 192 to 193 (IT).

Belongs to the thiamine-phosphate synthase family. Requires Mg(2+) as cofactor.

It catalyses the reaction 2-[(2R,5Z)-2-carboxy-4-methylthiazol-5(2H)-ylidene]ethyl phosphate + 4-amino-2-methyl-5-(diphosphooxymethyl)pyrimidine + 2 H(+) = thiamine phosphate + CO2 + diphosphate. The enzyme catalyses 2-(2-carboxy-4-methylthiazol-5-yl)ethyl phosphate + 4-amino-2-methyl-5-(diphosphooxymethyl)pyrimidine + 2 H(+) = thiamine phosphate + CO2 + diphosphate. The catalysed reaction is 4-methyl-5-(2-phosphooxyethyl)-thiazole + 4-amino-2-methyl-5-(diphosphooxymethyl)pyrimidine + H(+) = thiamine phosphate + diphosphate. It functions in the pathway cofactor biosynthesis; thiamine diphosphate biosynthesis; thiamine phosphate from 4-amino-2-methyl-5-diphosphomethylpyrimidine and 4-methyl-5-(2-phosphoethyl)-thiazole: step 1/1. Its function is as follows. Condenses 4-methyl-5-(beta-hydroxyethyl)thiazole monophosphate (THZ-P) and 2-methyl-4-amino-5-hydroxymethyl pyrimidine pyrophosphate (HMP-PP) to form thiamine monophosphate (TMP). The polypeptide is Thiamine-phosphate synthase (Bordetella avium (strain 197N)).